The primary structure comprises 109 residues: Non-structural protein of 12.7 kDa (109 aa).

The protein belongs to the coronaviruses ns12.7 protein family.

This Sus scrofa (Pig) protein is Non-structural protein of 12.7 kDa.